We begin with the raw amino-acid sequence, 218 residues long: Uracil-DNA glycosylase (218 aa).

The active-site Proton acceptor is Asp-68.

This sequence belongs to the uracil-DNA glycosylase (UDG) superfamily. UNG family. As to quaternary structure, homodimer. Interacts with protein OPG148. Component of the Uracil-DNA glycosylase(UDG)-OPG148-polymerase complex; OPG148 and UDG form a heterodimeric processivity factor that associates with OPG71 to form the processive polymerase holoenzyme.

It catalyses the reaction Hydrolyzes single-stranded DNA or mismatched double-stranded DNA and polynucleotides, releasing free uracil.. Its function is as follows. Plays an essential role in viral replication as a component of the DNA polymerase processivity factor. Excises uracil residues from the DNA which can arise as a result of misincorporation of dUMP residues by DNA polymerase or due to deamination of cytosine. This chain is Uracil-DNA glycosylase (OPG116), found in Vaccinia virus (strain Ankara) (VACV).